Here is a 424-residue protein sequence, read N- to C-terminus: Zinc metalloprotease RasP (424 aa).

5 consecutive transmembrane segments (helical) span residues 5–25 (VAFILMFGVLVSIHEWGHLIF), 174–194 (FAGPMMNFVLAIAIFLILGII), 317–337 (LFMLVTGQVSIELLSGPVGIY), 351–371 (FLLWTAMLSINLGIINLVPLP), and 396–416 (EGIFHFVGFALLMLLMIVVTW). His-18 is a Zn(2+) binding site. Glu-19 is an active-site residue. His-22 is a Zn(2+) binding site. Residues 184–269 (AIAIFLILGI…SQDISVVPGE (86 aa)) enclose the PDZ domain.

This sequence belongs to the peptidase M50B family. Requires Zn(2+) as cofactor.

The protein resides in the cell membrane. Is responsible for Site-2 cleavage of the RsiW anti-sigma factor. This results, after a third proteolytic step catalyzed by the ClpXP protease, in the release of SigW and the transcription activation of the genes under the control of the sigma-W factor. The polypeptide is Zinc metalloprotease RasP (rasP) (Oceanobacillus iheyensis (strain DSM 14371 / CIP 107618 / JCM 11309 / KCTC 3954 / HTE831)).